The following is a 27-amino-acid chain: Bombinin-like peptide 2 (27 aa).

Asn-27 is modified (asparagine amide).

This sequence belongs to the bombinin family. In terms of tissue distribution, expressed by the skin glands.

It is found in the secreted. Functionally, has antimicrobial activity, but no hemolytic activity. Preference on killing Gram-negative non-enteric bacteria. This chain is Bombinin-like peptide 2, found in Bombina orientalis (Oriental fire-bellied toad).